We begin with the raw amino-acid sequence, 115 residues long: Peptidyl-tRNA hydrolase (115 aa).

It belongs to the PTH2 family.

It localises to the cytoplasm. The enzyme catalyses an N-acyl-L-alpha-aminoacyl-tRNA + H2O = an N-acyl-L-amino acid + a tRNA + H(+). Its function is as follows. The natural substrate for this enzyme may be peptidyl-tRNAs which drop off the ribosome during protein synthesis. The protein is Peptidyl-tRNA hydrolase of Methanocaldococcus jannaschii (strain ATCC 43067 / DSM 2661 / JAL-1 / JCM 10045 / NBRC 100440) (Methanococcus jannaschii).